A 266-amino-acid polypeptide reads, in one-letter code: GFP-like fluorescent chromoprotein cFP484 (266 aa).

Residues Gln-104–Gly-106 constitute a cross-link (2-iminomethyl-5-imidazolinone (Gln-Gly)). Position 105 is a 2,3-didehydrotyrosine (Tyr-105).

This sequence belongs to the GFP family. Contains a chromophore consisting of modified amino acid residues. The chromophore is formed by autocatalytic backbone condensation between Xaa-N and Gly-(N+2), oxidation of Tyr-(N+1) to didehydrotyrosine, and formation of a double bond to the alpha-amino nitrogen of residue Xaa-N. Maturation of the chromophore requires nothing other than molecular oxygen. The precise stereochemistry of the tyrosine has not been determined. In terms of tissue distribution, tentacle and oral disk.

Its function is as follows. Pigment protein that is green in color. This Clavularia sp. (Brown star polyp) protein is GFP-like fluorescent chromoprotein cFP484.